We begin with the raw amino-acid sequence, 280 residues long: MDTKIIVNHALRALLYEVTVNPKPGLVDPLSAGPHPDMNAFMFIDSALSLAPYFNACAAAGVAYTAVDLTGLFKQIRGIGVQAEQTMFAATKGVNTHKGAVFSLGVLVTAAAYQLQHPDVDLATIVRTMLAGLTANDFNDLNTKDPTTLTAGERQYLTYGIKGIRGEAEAGYPTVMQVALPALRRSRGTINQRLLDTLMAIVQATVDTNLVKRAHDPHVIDWVHDQAHRYFDLGGSRSEAGMAFLRELNQIFVDHNYSLGGSADLLILTIFIGLQTDILA.

It belongs to the CitG/MdcB family.

It catalyses the reaction 3'-dephospho-CoA + ATP = 2'-(5''-triphospho-alpha-D-ribosyl)-3'-dephospho-CoA + adenine. This Lactiplantibacillus plantarum (strain ATCC BAA-793 / NCIMB 8826 / WCFS1) (Lactobacillus plantarum) protein is Probable 2-(5''-triphosphoribosyl)-3'-dephosphocoenzyme-A synthase.